The sequence spans 71 residues: Ranatuerin-2Va (71 aa).

Residues 1 to 22 (MFTLKKSFLLLFFLGTITLSLC) form the signal peptide. The propeptide occupies 23 to 43 (EQERGADEDDGVEMTEEEVKR). A disulfide bridge links Cys66 with Cys71.

As to expression, expressed by the skin glands.

It localises to the secreted. Antimicrobial peptide. The polypeptide is Ranatuerin-2Va (Odorrana versabilis (Chinese bamboo leaf odorous frog)).